We begin with the raw amino-acid sequence, 341 residues long: Glycerol-3-phosphate dehydrogenase [NAD(P)+] (341 aa).

Residues S14, F15, R35, and K108 each coordinate NADPH. Residues K108 and G136 each contribute to the sn-glycerol 3-phosphate site. Position 140 (A140) interacts with NADPH. Positions 191, 244, 254, 255, and 256 each coordinate sn-glycerol 3-phosphate. The active-site Proton acceptor is K191. An NADPH-binding site is contributed by R255. 2 residues coordinate NADPH: V279 and E281.

It belongs to the NAD-dependent glycerol-3-phosphate dehydrogenase family.

It localises to the cytoplasm. The catalysed reaction is sn-glycerol 3-phosphate + NAD(+) = dihydroxyacetone phosphate + NADH + H(+). The enzyme catalyses sn-glycerol 3-phosphate + NADP(+) = dihydroxyacetone phosphate + NADPH + H(+). The protein operates within membrane lipid metabolism; glycerophospholipid metabolism. Functionally, catalyzes the reduction of the glycolytic intermediate dihydroxyacetone phosphate (DHAP) to sn-glycerol 3-phosphate (G3P), the key precursor for phospholipid synthesis. The sequence is that of Glycerol-3-phosphate dehydrogenase [NAD(P)+] from Pseudomonas putida (strain ATCC 47054 / DSM 6125 / CFBP 8728 / NCIMB 11950 / KT2440).